Reading from the N-terminus, the 272-residue chain is MKLVKPKKFLGQHFLKDLKVAQDIADTVDTFPDLPILEVGPGMGVLTQFLVKKERLVKVVEVDYESVAYLREAYPSLEDNIIEDDFLKMNLQRLFDGHPFVLTGNYPYNISSQIFFKMLDNKDLIPCCTGMIQKEVAERIAAGPGSKTYGILSVLIQAWYRVEYLFTVNEQVFNPPPKVKSAVIRMTRNETQELGCDPKLFKQIVKTTFNQRRKTLRNSIKPILGKDCPLTEDALFNKRPEQLSVQEFIHLTNQVEQALKVPIEPVSQIENP.

6 residues coordinate S-adenosyl-L-methionine: H13, L15, G40, E61, D85, and N105.

This sequence belongs to the class I-like SAM-binding methyltransferase superfamily. rRNA adenine N(6)-methyltransferase family. RsmA subfamily.

The protein localises to the cytoplasm. It carries out the reaction adenosine(1518)/adenosine(1519) in 16S rRNA + 4 S-adenosyl-L-methionine = N(6)-dimethyladenosine(1518)/N(6)-dimethyladenosine(1519) in 16S rRNA + 4 S-adenosyl-L-homocysteine + 4 H(+). Functionally, specifically dimethylates two adjacent adenosines (A1518 and A1519) in the loop of a conserved hairpin near the 3'-end of 16S rRNA in the 30S particle. May play a critical role in biogenesis of 30S subunits. The sequence is that of Ribosomal RNA small subunit methyltransferase A from Bacteroides fragilis (strain ATCC 25285 / DSM 2151 / CCUG 4856 / JCM 11019 / LMG 10263 / NCTC 9343 / Onslow / VPI 2553 / EN-2).